Consider the following 159-residue polypeptide: Transcriptional repressor NrdR (159 aa).

A zinc finger spans residues 3-34; it reads CPFCRHEDTQVVDSRVSEDGAAIRRRRRCSAC. The 91-residue stretch at 49–139 folds into the ATP-cone domain; that stretch reads PAVVKKDGSR…VYRRFEDVSE (91 aa).

Belongs to the NrdR family. It depends on Zn(2+) as a cofactor.

Its function is as follows. Negatively regulates transcription of bacterial ribonucleotide reductase nrd genes and operons by binding to NrdR-boxes. The chain is Transcriptional repressor NrdR from Burkholderia ambifaria (strain MC40-6).